A 212-amino-acid polypeptide reads, in one-letter code: Ribosomal RNA small subunit methyltransferase G (212 aa).

S-adenosyl-L-methionine contacts are provided by residues G72, L77, 123–124, and R138; that span reads VE.

The protein belongs to the methyltransferase superfamily. RNA methyltransferase RsmG family.

It localises to the cytoplasm. It carries out the reaction guanosine(527) in 16S rRNA + S-adenosyl-L-methionine = N(7)-methylguanosine(527) in 16S rRNA + S-adenosyl-L-homocysteine. Its function is as follows. Specifically methylates the N7 position of guanine in position 527 of 16S rRNA. This is Ribosomal RNA small subunit methyltransferase G from Histophilus somni (strain 2336) (Haemophilus somnus).